A 312-amino-acid chain; its full sequence is MSTILLPKTQHLVVFQEVIRSGSIGSAAKELGLTQPAVSKIINDIEDYFGVELVVRKNTGVTLTPAGQLLLSRSESITREMKNMVNEISGMSSEAVVEVSFGFPSLIGFTFMSGMINKFKEVFPKAQVSMYEAQLSSFLPAIRDGRLDFAIGTLSAEMKLQDLHVEPLFESEFVLVASKSRTCTGTTTLESLKNEQWVLPQTNMGYYSELLTTLQRNGISIENIVKTDSVVTIYNLVLNADFLTVIPCDMTSPFGSNQFITIPVEETLPVAQYAAVWSKNYRIKKAASVLVELAKEYSSYNGCRRRQLIEVG.

Residues 7 to 64 (PKTQHLVVFQEVIRSGSIGSAAKELGLTQPAVSKIINDIEDYFGVELVVRKNTGVTLT) enclose the HTH lysR-type domain. The segment at residues 24–43 (IGSAAKELGLTQPAVSKIIN) is a DNA-binding region (H-T-H motif).

Belongs to the LysR transcriptional regulatory family.

Its pathway is amino-acid degradation; L-threonine degradation via propanoate pathway [regulation]. Transcriptional activator for the tdcABCDE operon. The polypeptide is HTH-type transcriptional regulator TdcA (tdcA) (Escherichia coli O157:H7).